We begin with the raw amino-acid sequence, 504 residues long: Malonyl-CoA decarboxylase, mitochondrial (504 aa).

The N-terminal 50 residues, 1 to 50, are a transit peptide targeting the mitochondrion; the sequence is MRGLRRGLSRLGPRLGPWAVPRSLRRVLRAAGPWRGQSSAGSVSERGGAS. Residues 51-201 form an alpha-helical domain region; the sequence is MEEVLSRSVP…VLKNMLSEWF (151 aa). A catalytic domain region spans residues 202 to 504; the sequence is STGFLNLERV…VSQFQQNSKL (303 aa). The active-site Proton acceptor is the S340. H434 functions as the Proton donor in the catalytic mechanism. The Microbody targeting signal motif lies at 502–504; sequence SKL.

The protein resides in the mitochondrion. It is found in the cytoplasm. The protein localises to the peroxisome. It catalyses the reaction malonyl-CoA + H(+) = acetyl-CoA + CO2. Its pathway is metabolic intermediate biosynthesis; acetyl-CoA biosynthesis; acetyl-CoA from malonyl-CoA: step 1/1. Its function is as follows. Catalyzes the conversion of malonyl-CoA to acetyl-CoA. In the fatty acid biosynthesis MCD selectively removes malonyl-CoA and thus assures that methyl-malonyl-CoA is the only chain elongating substrate for fatty acid synthase and that fatty acids with multiple methyl side chains are produced. This chain is Malonyl-CoA decarboxylase, mitochondrial (MLYCD), found in Anser anser anser (Western greylag goose).